The primary structure comprises 501 residues: Solute carrier family 2, facilitated glucose transporter member 5 (501 aa).

The residue at position 1 (Met1) is an N-acetylmethionine. Over 1-18 (MEPQDPVKREGRLTPVIV) the chain is Cytoplasmic. A helical transmembrane segment spans residues 19-39 (LATLIAAFGSSFQYGYNVATI). A D-fructose-binding site is contributed by Tyr32. At 40–68 (NSPSEFMKDFYNYTYYDRVGEYMNEFYLT) the chain is on the extracellular side. Residue Asn51 is glycosylated (N-linked (GlcNAc...) asparagine). The helical transmembrane segment at 69–91 (LLWSVTVSMFPFGGFLGSLMVGP) threads the bilayer. Residues 92–98 (LVNNLGR) lie on the Cytoplasmic side of the membrane. Residues 99-119 (KGTLLFNNIFSIVPALLMGFS) form a helical membrane-spanning segment. Residues 120–126 (DLAKSFE) lie on the Extracellular side of the membrane. The chain crosses the membrane as a helical span at residues 127–149 (MIIVARVLVGICAGLSSNVVPMY). At 150 to 161 (LGELAPKNWRGA) the chain is on the cytoplasmic side. Residues 162 to 182 (LGVVPQLFITIGILVAQIFGL) traverse the membrane as a helical segment. Residue Gln167 participates in D-fructose binding. The Extracellular segment spans residues 183 to 192 (RSLLANEEGW). A helical transmembrane segment spans residues 193–213 (PILLGLTGIPAVLQLLFLPFF). Residues 214–277 (PESPRYLLIQ…LFKMRSLRWQ (64 aa)) lie on the Cytoplasmic side of the membrane. The chain crosses the membrane as a helical span at residues 278–298 (VISIIVLMAGQQLSGVNAIYY). Residues Gln288 and 296–298 (IYY) contribute to the D-fructose site. The Extracellular segment spans residues 299–313 (YADQIYLSAGVKEDD). A helical membrane pass occupies residues 314 to 334 (VQYVTAGTGAVNVLITVCAIF). The Cytoplasmic portion of the chain corresponds to 335 to 342 (VVELMGRR). Residues 343–363 (FLLLLGFSVCFTACCVLTGAL) form a helical membrane-spanning segment. Residues 364-371 (AMQDVISW) lie on the Extracellular side of the membrane. A helical transmembrane segment spans residues 372–394 (MPYVSIACVISYVIGHALGPSPI). His387 provides a ligand contact to D-fructose. The Cytoplasmic portion of the chain corresponds to 395–412 (PALLVTEIFLQSSRPAAY). A helical transmembrane segment spans residues 413-433 (MVAGTVHWLSNFTVGLVFPFI). 419 to 420 (HW) provides a ligand contact to D-fructose. The Extracellular segment spans residues 434 to 439 (QVGLGA). The helical transmembrane segment at 440–460 (YSFVIFAVICFLTTVYIFLII) threads the bilayer. Residues 461-501 (PETKSKTFIEINQIFIKMNKVPGVHPEKEELKEFPPSTARQ) lie on the Cytoplasmic side of the membrane.

This sequence belongs to the major facilitator superfamily. Sugar transporter (TC 2.A.1.1) family. Glucose transporter subfamily.

It is found in the apical cell membrane. The protein localises to the cell membrane. It localises to the sarcolemma. The catalysed reaction is D-fructose(out) = D-fructose(in). In terms of biological role, functions as a fructose transporter that has only low activity with other monosaccharides. Can mediate the uptake of deoxyglucose, but with low efficiency. Essential for fructose uptake in the small intestine. Plays a role in the regulation of salt uptake and blood pressure in response to dietary fructose. Required for the development of high blood pressure in response to high dietary fructose intake. The chain is Solute carrier family 2, facilitated glucose transporter member 5 from Ovis aries (Sheep).